Here is a 548-residue protein sequence, read N- to C-terminus: Probable malate:quinone oxidoreductase (548 aa).

This sequence belongs to the MQO family. Requires FAD as cofactor.

The enzyme catalyses (S)-malate + a quinone = a quinol + oxaloacetate. Its pathway is carbohydrate metabolism; tricarboxylic acid cycle; oxaloacetate from (S)-malate (quinone route): step 1/1. In Escherichia coli O6:H1 (strain CFT073 / ATCC 700928 / UPEC), this protein is Probable malate:quinone oxidoreductase.